A 202-amino-acid polypeptide reads, in one-letter code: Elongation factor Ts, chloroplastic (202 aa).

This sequence belongs to the EF-Ts family.

Its subcellular location is the plastid. The protein resides in the chloroplast. Its function is as follows. Associates with the EF-Tu.GDP complex and induces the exchange of GDP to GTP. It remains bound to the aminoacyl-tRNA.EF-Tu.GTP complex up to the GTP hydrolysis stage on the ribosome. This chain is Elongation factor Ts, chloroplastic (tsf), found in Phaeodactylum tricornutum (strain CCAP 1055/1).